Here is a 738-residue protein sequence, read N- to C-terminus: Vesicle-fusing ATPase (738 aa).

ATP contacts are provided by residues 507 to 512 (NGIINY) and 547 to 554 (PGCGKSSL).

The protein belongs to the AAA ATPase family. As to quaternary structure, interacts with syn7A, snpA and snpC. The cofactor is Mg(2+).

Its subcellular location is the cytoplasmic vesicle membrane. It localises to the endosome membrane. The enzyme catalyses ATP + H2O = ADP + phosphate + H(+). Functionally, required for vesicle-mediated transport. Involved in endocytosis and endosome-endosome fusion. May be required for transport from the endoplasmic reticulum to the Golgi stack, and for the fusion of transport vesicles within the Golgi cisternae. Required for cell polarity, locomotion and chemotaxis. This Dictyostelium discoideum (Social amoeba) protein is Vesicle-fusing ATPase (nsfA).